The chain runs to 491 residues: UDP-N-acetylmuramate--L-alanine ligase (491 aa).

126–132 contributes to the ATP binding site; that stretch reads GTHGKTT.

The protein belongs to the MurCDEF family.

It localises to the cytoplasm. The catalysed reaction is UDP-N-acetyl-alpha-D-muramate + L-alanine + ATP = UDP-N-acetyl-alpha-D-muramoyl-L-alanine + ADP + phosphate + H(+). Its pathway is cell wall biogenesis; peptidoglycan biosynthesis. Functionally, cell wall formation. This Salmonella arizonae (strain ATCC BAA-731 / CDC346-86 / RSK2980) protein is UDP-N-acetylmuramate--L-alanine ligase.